The primary structure comprises 107 residues: MSTSELACTYAALILHDDGLEITADNINTICKAAGVEVEGYWPALFAKLFAKKSMDDLITNVGAGGGAAPAAAAPAAGGAPAAGAAPKKEEKKEPSEEEDMGFSLFD.

Residues 67-107 form a disordered region; the sequence is GAAPAAAAPAAGGAPAAGAAPKKEEKKEPSEEEDMGFSLFD. Low complexity predominate over residues 69 to 86; the sequence is APAAAAPAAGGAPAAGAA.

Belongs to the eukaryotic ribosomal protein P1/P2 family. As to quaternary structure, P1 and P2 exist as dimers at the large ribosomal subunit.

Functionally, plays an important role in the elongation step of protein synthesis. This Chlamydomonas reinhardtii (Chlamydomonas smithii) protein is Large ribosomal subunit protein P1.